Here is a 74-residue protein sequence, read N- to C-terminus: Ferredoxin-like protein in nif region (74 aa).

The region spanning 2–30 is the 4Fe-4S ferredoxin-type domain; that stretch reads PFKIIASQCTSCSACEPLCPNVAISEKGG. C10, C13, C16, C20, C39, C51, and C55 together coordinate [4Fe-4S] cluster.

Requires [4Fe-4S] cluster as cofactor.

This chain is Ferredoxin-like protein in nif region (frxA), found in Bradyrhizobium diazoefficiens (strain JCM 10833 / BCRC 13528 / IAM 13628 / NBRC 14792 / USDA 110).